A 292-amino-acid chain; its full sequence is Ribosomal RNA small subunit methyltransferase A (292 aa).

The S-adenosyl-L-methionine site is built by asparagine 28, leucine 30, glycine 55, glutamate 76, aspartate 101, and asparagine 126.

The protein belongs to the class I-like SAM-binding methyltransferase superfamily. rRNA adenine N(6)-methyltransferase family. RsmA subfamily.

Its subcellular location is the cytoplasm. The enzyme catalyses adenosine(1518)/adenosine(1519) in 16S rRNA + 4 S-adenosyl-L-methionine = N(6)-dimethyladenosine(1518)/N(6)-dimethyladenosine(1519) in 16S rRNA + 4 S-adenosyl-L-homocysteine + 4 H(+). Functionally, specifically dimethylates two adjacent adenosines (A1518 and A1519) in the loop of a conserved hairpin near the 3'-end of 16S rRNA in the 30S particle. May play a critical role in biogenesis of 30S subunits. The sequence is that of Ribosomal RNA small subunit methyltransferase A from Bacillus cytotoxicus (strain DSM 22905 / CIP 110041 / 391-98 / NVH 391-98).